Reading from the N-terminus, the 189-residue chain is DFLFARTMIGVFKNIEYMCSRTNSKTWGKEAWKKIVVCVVSDGRAKINPRTRAVLAGLGVYQDGIAKQQVNGKDVTAHIYEYTTQIGMELKGNQVHLKPRSGVPVQMIFCLKEKNQKKINSHRWFFQAFGRVLDPNICVLLDAGTKPGRDSIYHLWRAFDLQPMCGGACGEIKAMLSHGKKLINPLIXA.

Belongs to the chitin synthase family. Class I subfamily.

It is found in the cell membrane. The enzyme catalyses [(1-&gt;4)-N-acetyl-beta-D-glucosaminyl](n) + UDP-N-acetyl-alpha-D-glucosamine = [(1-&gt;4)-N-acetyl-beta-D-glucosaminyl](n+1) + UDP + H(+). Polymerizes chitin, a structural polymer of the cell wall and septum, by transferring the sugar moiety of UDP-GlcNAc to the non-reducing end of the growing chitin polymer. This Ajellomyces capsulatus (Darling's disease fungus) protein is Chitin synthase 1 (CHS1).